Reading from the N-terminus, the 355-residue chain is UDP-N-acetylglucosamine--N-acetylmuramyl-(pentapeptide) pyrophosphoryl-undecaprenol N-acetylglucosamine transferase (355 aa).

UDP-N-acetyl-alpha-D-glucosamine is bound by residues 14–16 (TGG), N123, R164, S190, and Q284.

It belongs to the glycosyltransferase 28 family. MurG subfamily.

The protein localises to the cell inner membrane. The enzyme catalyses di-trans,octa-cis-undecaprenyl diphospho-N-acetyl-alpha-D-muramoyl-L-alanyl-D-glutamyl-meso-2,6-diaminopimeloyl-D-alanyl-D-alanine + UDP-N-acetyl-alpha-D-glucosamine = di-trans,octa-cis-undecaprenyl diphospho-[N-acetyl-alpha-D-glucosaminyl-(1-&gt;4)]-N-acetyl-alpha-D-muramoyl-L-alanyl-D-glutamyl-meso-2,6-diaminopimeloyl-D-alanyl-D-alanine + UDP + H(+). It participates in cell wall biogenesis; peptidoglycan biosynthesis. Its function is as follows. Cell wall formation. Catalyzes the transfer of a GlcNAc subunit on undecaprenyl-pyrophosphoryl-MurNAc-pentapeptide (lipid intermediate I) to form undecaprenyl-pyrophosphoryl-MurNAc-(pentapeptide)GlcNAc (lipid intermediate II). This is UDP-N-acetylglucosamine--N-acetylmuramyl-(pentapeptide) pyrophosphoryl-undecaprenol N-acetylglucosamine transferase from Synechocystis sp. (strain ATCC 27184 / PCC 6803 / Kazusa).